Here is a 188-residue protein sequence, read N- to C-terminus: MKVIVGLGNPGSKYKETKHNIGFITLDEIAYRQNVSFNNSNFEADIAEFFIGTEKVLLVKPLTFMNESGRSVGPLLTYFGVDEEDLIVIYDDLDLEIGKIRLRQKGSAGGHNGIKSLIAHLGTNVFPRIKIGIGRPSKNDTVIHHVLSTFPKETHEEMLLAVKKAADAALYACEGHTFVETMNQFNGK.

Residue Y14 participates in tRNA binding. Residue H19 is the Proton acceptor of the active site. TRNA is bound by residues F64, N66, and N112.

This sequence belongs to the PTH family. Monomer.

The protein localises to the cytoplasm. The catalysed reaction is an N-acyl-L-alpha-aminoacyl-tRNA + H2O = an N-acyl-L-amino acid + a tRNA + H(+). Functionally, hydrolyzes ribosome-free peptidyl-tRNAs (with 1 or more amino acids incorporated), which drop off the ribosome during protein synthesis, or as a result of ribosome stalling. In terms of biological role, catalyzes the release of premature peptidyl moieties from peptidyl-tRNA molecules trapped in stalled 50S ribosomal subunits, and thus maintains levels of free tRNAs and 50S ribosomes. In Enterococcus faecalis (strain ATCC 700802 / V583), this protein is Peptidyl-tRNA hydrolase.